The following is a 139-amino-acid chain: Actin-depolymerizing factor 1 (139 aa).

Residues Ala5–Leu139 form the ADF-H domain.

This sequence belongs to the actin-binding proteins ADF family.

Functionally, actin-depolymerizing protein. Severs actin filaments (F-actin) and binds to actin monomers. The sequence is that of Actin-depolymerizing factor 1 (ADF1) from Oryza sativa subsp. japonica (Rice).